The chain runs to 801 residues: DNA mismatch repair protein MutS (801 aa).

An ATP-binding site is contributed by 590–597; it reads GPNMSGKS.

The protein belongs to the DNA mismatch repair MutS family.

Functionally, this protein is involved in the repair of mismatches in DNA. It is possible that it carries out the mismatch recognition step. This protein has a weak ATPase activity. This Thermotoga neapolitana (strain ATCC 49049 / DSM 4359 / NBRC 107923 / NS-E) protein is DNA mismatch repair protein MutS.